The following is a 443-amino-acid chain: Amino-acid acetyltransferase (443 aa).

Residues 296-436 (EQIRRATIND…KMYNYQRRSK (141 aa)) enclose the N-acetyltransferase domain.

This sequence belongs to the acetyltransferase family. ArgA subfamily. In terms of assembly, homohexamer.

Its subcellular location is the cytoplasm. It carries out the reaction L-glutamate + acetyl-CoA = N-acetyl-L-glutamate + CoA + H(+). It functions in the pathway amino-acid biosynthesis; L-arginine biosynthesis; N(2)-acetyl-L-ornithine from L-glutamate: step 1/4. In Salmonella arizonae (strain ATCC BAA-731 / CDC346-86 / RSK2980), this protein is Amino-acid acetyltransferase.